The sequence spans 280 residues: Dual adapter for phosphotyrosine and 3-phosphotyrosine and 3-phosphoinositide (280 aa).

An SH2 domain is found at 35–129 (WYHGNLTRHA…GTLMVLKHPY (95 aa)). Tyr139 bears the Phosphotyrosine mark. Position 141 is a phosphoserine (Ser141). In terms of domain architecture, PH spans 164–259 (LGTKEGYLTK…WIKILRWKLS (96 aa)).

Interacts with PtdIns(3,4,5)P3 and PLCG2. Post-translationally, phosphorylated on tyrosine residues.

Its subcellular location is the cytoplasm. It localises to the membrane. Its function is as follows. May act as a B-cell-associated adapter that regulates B-cell antigen receptor (BCR)-signaling downstream of PI3K. The polypeptide is Dual adapter for phosphotyrosine and 3-phosphotyrosine and 3-phosphoinositide (Dapp1) (Mus musculus (Mouse)).